The sequence spans 307 residues: Small ribosomal subunit biogenesis GTPase RsgA (307 aa).

Residues Lys64 to Leu229 form the CP-type G domain. GTP is bound by residues Ser113–Asp116 and Gly172–Thr180. Positions 253, 258, 260, and 266 each coordinate Zn(2+).

The protein belongs to the TRAFAC class YlqF/YawG GTPase family. RsgA subfamily. Monomer. Associates with 30S ribosomal subunit, binds 16S rRNA. Requires Zn(2+) as cofactor.

The protein localises to the cytoplasm. In terms of biological role, one of several proteins that assist in the late maturation steps of the functional core of the 30S ribosomal subunit. Helps release RbfA from mature subunits. May play a role in the assembly of ribosomal proteins into the subunit. Circularly permuted GTPase that catalyzes slow GTP hydrolysis, GTPase activity is stimulated by the 30S ribosomal subunit. The sequence is that of Small ribosomal subunit biogenesis GTPase RsgA from Lactococcus lactis subsp. lactis (strain IL1403) (Streptococcus lactis).